Consider the following 206-residue polypeptide: Probable glutathione S-transferase 9 (206 aa).

In terms of domain architecture, GST N-terminal spans 2-79 (VSYKLIYFQS…YLSKQFGISG (78 aa)). Glutathione-binding positions include Y8, W39, K43, 49 to 51 (GQV), and 63 to 64 (QS). One can recognise a GST C-terminal domain in the interval 81–206 (SSWEEAQVDA…WIEKRPVTSR (126 aa)).

It belongs to the GST superfamily. Sigma family.

It catalyses the reaction RX + glutathione = an S-substituted glutathione + a halide anion + H(+). Conjugation of reduced glutathione to a wide number of exogenous and endogenous hydrophobic electrophiles. The protein is Probable glutathione S-transferase 9 (gst-9) of Caenorhabditis elegans.